The chain runs to 136 residues: Beta-hordothionin (136 aa).

The first 27 residues, 1–27, serve as a signal peptide directing secretion; the sequence is MGSKGLKGVMVCLLILGLVLEHVQVEG. Cystine bridges form between cysteine 30–cysteine 66, cysteine 31–cysteine 58, cysteine 39–cysteine 56, and cysteine 43–cysteine 52. The propeptide at 73-136 is acidic domain; sequence LALVSNSDEP…GDVGLTSLTA (64 aa).

It belongs to the plant thionin (TC 1.C.44) family. 4 C-C subfamily. As to quaternary structure, homodimer.

The protein localises to the secreted. Functionally, thionins are small plant proteins which are toxic to animal cells. They seem to exert their toxic effect at the level of the cell membrane. Their precise function is not known. This Hordeum vulgare (Barley) protein is Beta-hordothionin (THI1.2).